Here is a 750-residue protein sequence, read N- to C-terminus: MSDRYELFLTCPKGLEGLLAEEATALGLQETREHTSAIRGSADMETAYRLCLWSRLANRVLLVLKRFPMKDAEDLYHGVLDVEWHDHLEPEGTIAVEFSGHGSGIDNTHFGALKVKDAIVDKLRTPEGERPSVDKINPDLRVHLRLDRGEAILSLDLSGHSLHQRGYRLQQGAAPLKENLAAAILIRAGWPRIAAEGGALADPMCGVGTFLVEAGMIAADIAPNIKRERWGFSAWLGHVPTLWRKLHDEALARAEAGLAKTPSWIRGYEADPRLIQPGRNNIERAGLSDWIKVYQGEVATFEPRPDQNQKGLVICNPPYGERLGDEASLLYLYQNLGERLRQACLNWEAAVFTGAPDLGKRMGIRSHKQYSFWNGALPCKLLLIKVTPDQFVTGERRTPEQRQVERENPVEVEVVERKLNKNGNPIKPEPVVVEQARLSEGGQMFANRLQKNLKLLGKWVRREGIDCYRVYDADMPEYSLAIDLYHDWVHVQEYAAPKSIDPEKASARLFDALAAIPQALNIDKSRVVIKRRERQSGTKQYERQSAQGQFLEVSEGGVKLLVNLTDYLDTGLFLDHRPMRMRIQREAAGKRFLNLYAYTATASVHAAKGGARSTTSVDLSRTYLDWARRNLSLNGFSDKNRLEQGDVMAWLQANRDEYDLIFIDPPTFSNSKRMEGIFDVQRDQVELIDLAMARLAPGGVLYFSNNFRKFVLDENLGQRYAVEDITAQTIDPDFARNGKIHRAWKITARA.

One can recognise a THUMP domain in the interval 46 to 157 (TAYRLCLWSR…RGEAILSLDL (112 aa)).

The protein belongs to the methyltransferase superfamily. RlmKL family.

The protein localises to the cytoplasm. The catalysed reaction is guanosine(2445) in 23S rRNA + S-adenosyl-L-methionine = N(2)-methylguanosine(2445) in 23S rRNA + S-adenosyl-L-homocysteine + H(+). It carries out the reaction guanosine(2069) in 23S rRNA + S-adenosyl-L-methionine = N(2)-methylguanosine(2069) in 23S rRNA + S-adenosyl-L-homocysteine + H(+). Specifically methylates the guanine in position 2445 (m2G2445) and the guanine in position 2069 (m7G2069) of 23S rRNA. The chain is Ribosomal RNA large subunit methyltransferase K/L from Pseudomonas syringae pv. tomato (strain ATCC BAA-871 / DC3000).